A 502-amino-acid polypeptide reads, in one-letter code: MGTAKKEQQRRIREGNTKDGNLRVKGENFYRDGKRVKFLNMYKGGKSIRNAKGDLIRAAPLQSTDVPTARVQPDRRWFGNTRVISQDALQHFRDALGDKKNDSYQVLLRRNKLPMSLLEEKDTSESPTAKIIDTEPYGATFGPKAQRKKPRVAAASLEDLAKATDSDSQKYEEKKELDSTLGLMAATEQEDGWSQVAKEAIFHKGQSKRIWNELYKVIDSSDVVIHVLDARDPLGTRCKSVEEYMKKETPHKHLIYVLNKCDLVPTWLAAAWVKHLSKDRPTLAFHASITNSFGKGSLIQLLRQFSQLHKDRQQISVGFIGYPNTGKSSIINTLRKKKVCQVAPIPGETKVWQYITLMKRIFLIDCPGIVPPSAKDTEEDILFRGVVRVEHVSHPEQYIPAVLRRCKRHHLERTYEISGWADATEFIEMLARKQGRLLKGGEPDETGVAKQVLNDFNRGKIPWFVSPPDRDPQPETSKRPADSEPETAQEAPEPPANKRLRV.

Positions 1-20 are disordered; sequence MGTAKKEQQRRIREGNTKDG. A CP-type G domain is found at 211–372; sequence WNELYKVIDS…LIDCPGIVPP (162 aa). GTP contacts are provided by residues 321 to 328 and 365 to 369; these read GYPNTGKS and DCPGI. The segment at 459-502 is disordered; sequence GKIPWFVSPPDRDPQPETSKRPADSEPETAQEAPEPPANKRLRV. Positions 468–482 are enriched in basic and acidic residues; that stretch reads PDRDPQPETSKRPAD.

The protein belongs to the TRAFAC class YlqF/YawG GTPase family. NOG2 subfamily.

It is found in the nucleus. Its subcellular location is the nucleolus. GTPase that associates with pre-60S ribosomal subunits in the nucleolus and is required for their nuclear export and maturation. This Eremothecium gossypii (strain ATCC 10895 / CBS 109.51 / FGSC 9923 / NRRL Y-1056) (Yeast) protein is Nucleolar GTP-binding protein 2 (NOG2).